The following is a 76-amino-acid chain: uncharacterized protein (76 aa).

The disordered stretch occupies residues 27 to 76 (SINNGEGSSVVHRDATAPPTPPVVPTSTLQVPGLQRARTPEPNDPRVANL).

This is an uncharacterized protein from Caenorhabditis elegans.